The chain runs to 433 residues: Tyrosine--tRNA ligase (433 aa).

Tyr34 is a binding site for L-tyrosine. The short motif at 39 to 48 (PTASSLHVGS) is the 'HIGH' region element. 2 residues coordinate L-tyrosine: Tyr169 and Gln173. The 'KMSKS' region signature appears at 229–233 (KMGKT). An ATP-binding site is contributed by Lys232. In terms of domain architecture, S4 RNA-binding spans 364 to 432 (IPAFVLFHTV…RYHTIVVRKG (69 aa)).

This sequence belongs to the class-I aminoacyl-tRNA synthetase family. TyrS type 1 subfamily. In terms of assembly, homodimer.

The protein localises to the cytoplasm. The enzyme catalyses tRNA(Tyr) + L-tyrosine + ATP = L-tyrosyl-tRNA(Tyr) + AMP + diphosphate + H(+). Its function is as follows. Catalyzes the attachment of tyrosine to tRNA(Tyr) in a two-step reaction: tyrosine is first activated by ATP to form Tyr-AMP and then transferred to the acceptor end of tRNA(Tyr). The polypeptide is Tyrosine--tRNA ligase (Desulfosudis oleivorans (strain DSM 6200 / JCM 39069 / Hxd3) (Desulfococcus oleovorans)).